Here is a 459-residue protein sequence, read N- to C-terminus: Putrescine aminotransferase (459 aa).

Residues 150 to 151 (GT) and glutamine 274 contribute to the pyridoxal 5'-phosphate site. Residue lysine 300 is modified to N6-(pyridoxal phosphate)lysine. Residue threonine 332 coordinates pyridoxal 5'-phosphate.

It belongs to the class-III pyridoxal-phosphate-dependent aminotransferase family. Putrescine aminotransferase subfamily. Requires pyridoxal 5'-phosphate as cofactor.

The enzyme catalyses an alkane-alpha,omega-diamine + 2-oxoglutarate = an omega-aminoaldehyde + L-glutamate. It carries out the reaction putrescine + 2-oxoglutarate = 1-pyrroline + L-glutamate + H2O. The catalysed reaction is cadaverine + 2-oxoglutarate = 5-aminopentanal + L-glutamate. It participates in amine and polyamine degradation; putrescine degradation; 4-aminobutanal from putrescine (transaminase route): step 1/1. In terms of biological role, catalyzes the aminotransferase reaction from putrescine to 2-oxoglutarate, leading to glutamate and 4-aminobutanal, which spontaneously cyclizes to form 1-pyrroline. This is the first step in one of two pathways for putrescine degradation, where putrescine is converted into 4-aminobutanoate (gamma-aminobutyrate or GABA) via 4-aminobutanal. Also functions as a cadaverine transaminase in a a L-lysine degradation pathway to succinate that proceeds via cadaverine, glutarate and L-2-hydroxyglutarate. This Escherichia coli (strain SMS-3-5 / SECEC) protein is Putrescine aminotransferase.